The chain runs to 29 residues: NADH dehydrogenase [ubiquinone] 1 beta subcomplex subunit 10 (29 aa).

Residues 1-29 form a disordered region; the sequence is GRKKGVQFDEGAPDDFDPNNPYKKDVAFL.

The protein belongs to the complex I NDUFB10 subunit family. In terms of assembly, complex I is composed of about 45 different subunits.

The protein resides in the mitochondrion inner membrane. In terms of biological role, accessory subunit of the mitochondrial membrane respiratory chain NADH dehydrogenase (Complex I), that is believed not to be involved in catalysis. Complex I functions in the transfer of electrons from NADH to the respiratory chain. The immediate electron acceptor for the enzyme is believed to be ubiquinone. The protein is NADH dehydrogenase [ubiquinone] 1 beta subcomplex subunit 10 of Solanum tuberosum (Potato).